The primary structure comprises 866 residues: DNA mismatch repair protein MutS (866 aa).

Residue 618–625 (GPNMSGKS) participates in ATP binding.

The protein belongs to the DNA mismatch repair MutS family.

In terms of biological role, this protein is involved in the repair of mismatches in DNA. It is possible that it carries out the mismatch recognition step. This protein has a weak ATPase activity. This Flavobacterium psychrophilum (strain ATCC 49511 / DSM 21280 / CIP 103535 / JIP02/86) protein is DNA mismatch repair protein MutS.